Here is a 137-residue protein sequence, read N- to C-terminus: S-adenosylmethionine decarboxylase proenzyme (137 aa).

The Schiff-base intermediate with substrate; via pyruvic acid role is filled by serine 63. The residue at position 63 (serine 63) is a Pyruvic acid (Ser); by autocatalysis. The active-site Proton acceptor; for processing activity is histidine 68. Cysteine 83 serves as the catalytic Proton donor; for catalytic activity.

Belongs to the prokaryotic AdoMetDC family. Type 1 subfamily. In terms of assembly, heterotetramer of two alpha and two beta chains arranged as a dimer of alpha/beta heterodimers. The cofactor is pyruvate. In terms of processing, is synthesized initially as an inactive proenzyme. Formation of the active enzyme involves a self-maturation process in which the active site pyruvoyl group is generated from an internal serine residue via an autocatalytic post-translational modification. Two non-identical subunits are generated from the proenzyme in this reaction, and the pyruvate is formed at the N-terminus of the alpha chain, which is derived from the carboxyl end of the proenzyme. The post-translation cleavage follows an unusual pathway, termed non-hydrolytic serinolysis, in which the side chain hydroxyl group of the serine supplies its oxygen atom to form the C-terminus of the beta chain, while the remainder of the serine residue undergoes an oxidative deamination to produce ammonia and the pyruvoyl group blocking the N-terminus of the alpha chain.

It catalyses the reaction S-adenosyl-L-methionine + H(+) = S-adenosyl 3-(methylsulfanyl)propylamine + CO2. It participates in amine and polyamine biosynthesis; S-adenosylmethioninamine biosynthesis; S-adenosylmethioninamine from S-adenosyl-L-methionine: step 1/1. Catalyzes the decarboxylation of S-adenosylmethionine to S-adenosylmethioninamine (dcAdoMet), the propylamine donor required for the synthesis of the polyamines spermine and spermidine from the diamine putrescine. This Fervidobacterium nodosum (strain ATCC 35602 / DSM 5306 / Rt17-B1) protein is S-adenosylmethionine decarboxylase proenzyme.